Consider the following 171-residue polypeptide: S-ribosylhomocysteine lyase (171 aa).

Residues His54, His58, and Cys128 each coordinate Fe cation.

It belongs to the LuxS family. In terms of assembly, homodimer. Fe cation is required as a cofactor.

The enzyme catalyses S-(5-deoxy-D-ribos-5-yl)-L-homocysteine = (S)-4,5-dihydroxypentane-2,3-dione + L-homocysteine. Functionally, involved in the synthesis of autoinducer 2 (AI-2) which is secreted by bacteria and is used to communicate both the cell density and the metabolic potential of the environment. The regulation of gene expression in response to changes in cell density is called quorum sensing. Catalyzes the transformation of S-ribosylhomocysteine (RHC) to homocysteine (HC) and 4,5-dihydroxy-2,3-pentadione (DPD). In Salmonella typhi, this protein is S-ribosylhomocysteine lyase.